Reading from the N-terminus, the 231-residue chain is 2-C-methyl-D-erythritol 4-phosphate cytidylyltransferase (231 aa).

Belongs to the IspD/TarI cytidylyltransferase family. IspD subfamily.

It carries out the reaction 2-C-methyl-D-erythritol 4-phosphate + CTP + H(+) = 4-CDP-2-C-methyl-D-erythritol + diphosphate. It participates in isoprenoid biosynthesis; isopentenyl diphosphate biosynthesis via DXP pathway; isopentenyl diphosphate from 1-deoxy-D-xylulose 5-phosphate: step 2/6. In terms of biological role, catalyzes the formation of 4-diphosphocytidyl-2-C-methyl-D-erythritol from CTP and 2-C-methyl-D-erythritol 4-phosphate (MEP). The sequence is that of 2-C-methyl-D-erythritol 4-phosphate cytidylyltransferase from Bacillus licheniformis (strain ATCC 14580 / DSM 13 / JCM 2505 / CCUG 7422 / NBRC 12200 / NCIMB 9375 / NCTC 10341 / NRRL NRS-1264 / Gibson 46).